The chain runs to 181 residues: MSLPMTETVTDPAETAPPTAERSYPRFAKPQRVAFVQSSWHRDVVAGCWESFVREIVERGIVASQVDLFEVPGSFEIPLHVQMLAKTRRYTAIVAAGLVVDDGLTGFVAQTVIQALMDVQLKTEVPVFSAVATPHSFERGSPNTEHFRQHFATKGADVAHACADTLLSLERLRGQVAAGIV.

Residues 1–23 (MSLPMTETVTDPAETAPPTAERS) form a disordered region. 5-amino-6-(D-ribitylamino)uracil-binding positions include Trp40, 74–76 (SFE), 98–100 (LVV), and Ser129.

Belongs to the DMRL synthase family.

The enzyme catalyses (2S)-2-hydroxy-3-oxobutyl phosphate + 5-amino-6-(D-ribitylamino)uracil = 6,7-dimethyl-8-(1-D-ribityl)lumazine + phosphate + 2 H2O + H(+). Its pathway is cofactor biosynthesis; riboflavin biosynthesis; riboflavin from 2-hydroxy-3-oxobutyl phosphate and 5-amino-6-(D-ribitylamino)uracil: step 1/2. Catalyzes the formation of 6,7-dimethyl-8-ribityllumazine by condensation of 5-amino-6-(D-ribitylamino)uracil with 3,4-dihydroxy-2-butanone 4-phosphate. This is the penultimate step in the biosynthesis of riboflavin. This Rhodopseudomonas palustris (strain ATCC BAA-98 / CGA009) protein is 6,7-dimethyl-8-ribityllumazine synthase 2.